The sequence spans 183 residues: uncharacterized protein (183 aa).

The span at 105–149 (YNTNNSNTNTNYNNNNNNNNNNNNNNNNNNNKNNNNNNNNNNSNS) shows a compositional bias: low complexity. Residues 105-151 (YNTNNSNTNTNYNNNNNNNNNNNNNNNNNNNKNNNNNNNNNNSNSKI) are disordered.

This is an uncharacterized protein from Dictyostelium discoideum (Social amoeba).